The primary structure comprises 189 residues: Protein Rex (189 aa).

Over residues 1-16 (MPKTRRRPRRSQRKRP) the composition is skewed to basic residues. The segment at 1-28 (MPKTRRRPRRSQRKRPPTPWPTSQGLDR) is disordered. The short motif at 2–18 (PKTRRRPRRSQRKRPPT) is the Nuclear localization signal, and RNA-binding (RxRE) element. A homomultimerization region spans residues 56–70 (RPVYIVTPYWPPVQS). Phosphoserine; by host is present on Ser-70. The Nuclear export signal signature appears at 82–93 (LSAQLYSSLSLD). Residues 84 to 94 (AQLYSSLSLDS) are compositionally biased toward low complexity. The disordered stretch occupies residues 84–189 (AQLYSSLSLD…PPSPGPSCPT (106 aa)). Over residues 111–125 (RRPPIQPPTFHPPSS) the composition is skewed to pro residues. Residues 123 to 131 (PSSRPCANT) are homomultimerization. A compositionally biased stretch (polar residues) spans 127-164 (PCANTPPSETDTWNPPLGSTSQPCLFQTPASGPKTCTP). Thr-174 carries the phosphothreonine; by host modification. Ser-177 is subject to Phosphoserine; by host. A compositionally biased stretch (pro residues) spans 178 to 189 (FPPPSPGPSCPT).

This sequence belongs to the deltaretrovirus Rex protein family. In terms of assembly, homomultimer. Multimeric assembly is essential for activity and involves XPO1. Binds to human XPO1 and KPNB1. Interacts (via N-terminal nuclear localization signal) with human NPM1. Post-translationally, phosphorylated.

Its subcellular location is the host nucleus. It is found in the host nucleolus. The protein resides in the host cytoplasm. Rex escorts unspliced gag-pro-pol and singly spliced env mRNAs out of the nucleus of infected cells. These mRNAs carry a recognition sequence called Rex responsive element (RxRE or XRE) located at the 3' region of the long terminal repeat (LTR). This function is essential since most HTLV proteins are translated from unspliced or partially spliced pre-mRNAs that cannot exit the nucleus by the pathway used by fully processed cellular mRNAs. Rex itself is translated from a fully spliced mRNA that probably readily exits the nucleus. Rex's nuclear localization signal (NLS) binds directly to KPNB1/importin beta-1 without previous binding to KPNA1/importin alpha-1. KPNB1 binds to the GDP bound form of RAN (Ran-GDP) and targets Rex to the nucleus. In the nucleus, the conversion from Ran-GDP to Ran-GTP dissociates Rex from KPNB1 and allows Rex's binding to the RRE in viral pre-mRNAs. Rex multimerizes on the RRE via cooperative assembly. This multimerization is critical for its full biological activity, since it may shield the viral RNA from being spliced or down-regulated, and probably exposes Rex's nuclear export signal (NES) to the surface. Rex can then form a complex with XPO1/CRM1, RANBP3 and Ran-GTP, leading to nuclear export of the complex. Conversion from Ran-GTP to Ran-GDP mediates dissociation of the Rex/RRE/XPO1/RANBP3/RAN complex, so that Rex can return to the nucleus for a subsequent round of export. The protein is Protein Rex of Homo sapiens (Human).